Consider the following 248-residue polypeptide: Granzyme E (248 aa).

An N-terminal signal peptide occupies residues 1–18 (MPPVLILLTLLLPLGAGA). Positions 19–20 (EE) are excised as a propeptide. In terms of domain architecture, Peptidase S1 spans 21–246 (IIGGHVVKPH…FLPWISRNMK (226 aa)). An intrachain disulfide couples C50 to C66. Residue H65 is the Charge relay system of the active site. Residues N68 and N102 are each glycosylated (N-linked (GlcNAc...) asparagine). Residue D109 is the Charge relay system of the active site. 2 disulfides stabilise this stretch: C143–C210 and C175–C189. N154 carries N-linked (GlcNAc...) asparagine glycosylation. S204 functions as the Charge relay system in the catalytic mechanism. A glycan (N-linked (GlcNAc...) asparagine) is linked at N223.

It belongs to the peptidase S1 family. Granzyme subfamily.

The protein localises to the cytolytic granule. In terms of biological role, this enzyme is probably necessary for target cell lysis in cell-mediated immune responses. The protein is Granzyme E (Gzme) of Mus musculus (Mouse).